Here is a 456-residue protein sequence, read N- to C-terminus: tRNA-2-methylthio-N(6)-dimethylallyladenosine synthase (456 aa).

One can recognise an MTTase N-terminal domain in the interval 17-135 (KLYLIQSFGC…LPRMIHQVQE (119 aa)). 6 residues coordinate [4Fe-4S] cluster: C26, C62, C96, C172, C176, and C179. One can recognise a Radical SAM core domain in the interval 158 to 387 (RKDKLKAWVT…IELQNLISLE (230 aa)). Residues 390–453 (QREEGRVLEV…PNLLEGEVVP (64 aa)) form the TRAM domain.

This sequence belongs to the methylthiotransferase family. MiaB subfamily. Monomer. [4Fe-4S] cluster is required as a cofactor.

The protein localises to the cytoplasm. The enzyme catalyses N(6)-dimethylallyladenosine(37) in tRNA + (sulfur carrier)-SH + AH2 + 2 S-adenosyl-L-methionine = 2-methylsulfanyl-N(6)-dimethylallyladenosine(37) in tRNA + (sulfur carrier)-H + 5'-deoxyadenosine + L-methionine + A + S-adenosyl-L-homocysteine + 2 H(+). Its function is as follows. Catalyzes the methylthiolation of N6-(dimethylallyl)adenosine (i(6)A), leading to the formation of 2-methylthio-N6-(dimethylallyl)adenosine (ms(2)i(6)A) at position 37 in tRNAs that read codons beginning with uridine. This is tRNA-2-methylthio-N(6)-dimethylallyladenosine synthase from Desulforamulus reducens (strain ATCC BAA-1160 / DSM 100696 / MI-1) (Desulfotomaculum reducens).